Consider the following 500-residue polypeptide: Cholesterol 24-hydroxylase (500 aa).

Residues 3–23 (PGLLLLGSAVLLAFGLCCTFV) form a helical membrane-spanning segment. Cys437 provides a ligand contact to heme.

Belongs to the cytochrome P450 family. It depends on heme as a cofactor. Expressed in high level in the pyramidal cells of the hippocampus, Purkinje cells of the cerebellum, and neuronal cell bodies in layers II/III, V, and VI of the cortex. Expressed in hippocampal and cerebellar interneurons, in retinal ganglion cells, and in a subset of retinal cells localized to the inner nuclear layer (at protein level).

It localises to the endoplasmic reticulum membrane. Its subcellular location is the microsome membrane. It is found in the postsynapse. The protein localises to the presynapse. The protein resides in the cell projection. It localises to the dendrite. It carries out the reaction cholesterol + reduced [NADPH--hemoprotein reductase] + O2 = (24S)-hydroxycholesterol + oxidized [NADPH--hemoprotein reductase] + H2O + H(+). It catalyses the reaction cholestanol + reduced [NADPH--hemoprotein reductase] + O2 = (24S)-hydroxycholestanol + oxidized [NADPH--hemoprotein reductase] + H2O + H(+). The catalysed reaction is 7-dehydrocholesterol + reduced [NADPH--hemoprotein reductase] + O2 = cholesta-5,7-dien-3beta,24S-diol + oxidized [NADPH--hemoprotein reductase] + H2O + H(+). The enzyme catalyses 7-dehydrocholesterol + reduced [NADPH--hemoprotein reductase] + O2 = cholesta-5,7-dien-3beta,25-diol + oxidized [NADPH--hemoprotein reductase] + H2O + H(+). It carries out the reaction desmosterol + reduced [NADPH--hemoprotein reductase] + O2 = (24Z),26-hydroxydesmosterol + oxidized [NADPH--hemoprotein reductase] + H2O + H(+). It catalyses the reaction desmosterol + reduced [NADPH--hemoprotein reductase] + O2 = (24S)-25-epoxycholesterol + oxidized [NADPH--hemoprotein reductase] + H2O + H(+). The catalysed reaction is 4beta-hydroxycholesterol + reduced [NADPH--hemoprotein reductase] + O2 = 4beta,24S-dihydroxycholesterol + oxidized [NADPH--hemoprotein reductase] + H2O + H(+). The enzyme catalyses (24S)-hydroxycholesterol + reduced [NADPH--hemoprotein reductase] + O2 = (24S,25R)-24,26-dihydroxycholesterol + oxidized [NADPH--hemoprotein reductase] + H2O + H(+). It carries out the reaction (24S)-hydroxycholesterol + reduced [NADPH--hemoprotein reductase] + O2 = 24S,25-dihydroxycholesterol + oxidized [NADPH--hemoprotein reductase] + H2O + H(+). It catalyses the reaction 7alpha-hydroxycholesterol + reduced [NADPH--hemoprotein reductase] + O2 = (24S)-7alpha-dihydroxycholesterol + oxidized [NADPH--hemoprotein reductase] + H2O + H(+). The catalysed reaction is progesterone + reduced [NADPH--hemoprotein reductase] + O2 = 17alpha-hydroxyprogesterone + oxidized [NADPH--hemoprotein reductase] + H2O + H(+). The enzyme catalyses testosterone + reduced [NADPH--hemoprotein reductase] + O2 = 16beta,17beta-dihydroxyandrost-4-en-3-one + oxidized [NADPH--hemoprotein reductase] + H2O + H(+). It carries out the reaction testosterone + reduced [NADPH--hemoprotein reductase] + O2 = 2-hydroxytestosterone + oxidized [NADPH--hemoprotein reductase] + H2O + H(+). It catalyses the reaction testosterone + reduced [NADPH--hemoprotein reductase] + O2 = 6beta,17beta-dihydroxyandrost-4-en-3-one + oxidized [NADPH--hemoprotein reductase] + H2O + H(+). The protein operates within steroid metabolism; cholesterol degradation. Its pathway is lipid metabolism; C21-steroid hormone metabolism. Functionally, P450 monooxygenase that plays a major role in cholesterol homeostasis in the brain. Primarily catalyzes the hydroxylation (with S stereochemistry) at C-24 of cholesterol side chain, triggering cholesterol diffusion out of neurons and its further degradation. By promoting constant cholesterol elimination in neurons, may activate the mevalonate pathway and coordinate the synthesis of new cholesterol and nonsterol isoprenoids involved in synaptic activity and learning. Further hydroxylates cholesterol derivatives and hormone steroids on both the ring and side chain of these molecules, converting them into active oxysterols involved in lipid signaling and biosynthesis. Acts as an epoxidase converting cholesta-5,24-dien-3beta-ol/desmosterol into (24S),25-epoxycholesterol, an abundant lipid ligand of nuclear NR1H2 and NR1H3 receptors shown to promote neurogenesis in developing brain. May also catalyze the oxidative metabolism of xenobiotics, such as clotrimazole. This is Cholesterol 24-hydroxylase from Mus musculus (Mouse).